The following is a 493-amino-acid chain: Galactose-1-phosphate uridylyltransferase (493 aa).

Belongs to the galactose-1-phosphate uridylyltransferase type 2 family.

It is found in the cytoplasm. The enzyme catalyses alpha-D-galactose 1-phosphate + UDP-alpha-D-glucose = alpha-D-glucose 1-phosphate + UDP-alpha-D-galactose. The protein operates within carbohydrate metabolism; galactose metabolism. The sequence is that of Galactose-1-phosphate uridylyltransferase from Lactococcus lactis subsp. cremoris (strain SK11).